A 251-amino-acid polypeptide reads, in one-letter code: Adenosine 5'-phosphosulfate reductase (251 aa).

Residues Cys-121, Cys-122, Cys-204, and Cys-207 each contribute to the [4Fe-4S] cluster site. The active-site Nucleophile; cysteine thiosulfonate intermediate is the Cys-232.

This sequence belongs to the PAPS reductase family. CysH subfamily. Requires [4Fe-4S] cluster as cofactor.

The protein resides in the cytoplasm. It carries out the reaction [thioredoxin]-disulfide + sulfite + AMP + 2 H(+) = adenosine 5'-phosphosulfate + [thioredoxin]-dithiol. Its pathway is sulfur metabolism; hydrogen sulfide biosynthesis; sulfite from sulfate. Catalyzes the formation of sulfite from adenosine 5'-phosphosulfate (APS) using thioredoxin as an electron donor. This Sinorhizobium fredii (strain USDA 257) protein is Adenosine 5'-phosphosulfate reductase.